The sequence spans 370 residues: Vasopressin V2 receptor (370 aa).

The disordered stretch occupies residues 1–28 (MLRATTSAVPRALSWPAAPGNGSEREPL). The Extracellular segment spans residues 1 to 37 (MLRATTSAVPRALSWPAAPGNGSEREPLDDRDPLLAR). Residue Asn21 is glycosylated (N-linked (GlcNAc...) asparagine). The chain crosses the membrane as a helical span at residues 38–62 (VELALLSTVFVAVALSNGLVLGALV). Residues 63–76 (RRGRRGRWAPMHVF) lie on the Cytoplasmic side of the membrane. The chain crosses the membrane as a helical span at residues 77 to 97 (IGHLCLADLAVALFQVLPQLA). Over 98-112 (WDATYRFRGPDALCR) the chain is Extracellular. The chain crosses the membrane as a helical span at residues 113–134 (AVKYLQMVGMYASSYMILAMTL). Over 135–158 (DRHRAICRPMLAYRHGGGARWNRP) the chain is Cytoplasmic. The helical transmembrane segment at 159–179 (VLVAWAFSLLLSLPQLFIFAQ) threads the bilayer. Residues 180-199 (RDVGDGSGVLDCWASFAEPW) lie on the Extracellular side of the membrane. The chain crosses the membrane as a helical span at residues 200 to 219 (GLRAYVTWIALMVFVAPALG). Topologically, residues 220–270 (IAACQVLIFREIHTSLVPGPAERAGGHRGGRRAGSPREGARVSAAMAKTAR) are cytoplasmic. A helical transmembrane segment spans residues 271 to 292 (MTLVIVAVYVLCWAPFFLVQLW). Topologically, residues 293-307 (SVWDPKAPREGPPFV) are extracellular. The chain crosses the membrane as a helical span at residues 308 to 327 (LLMLLASLNSCTNPWIYASF). The Cytoplasmic segment spans residues 328–370 (SSSISSELRSLLCCPRRRTPPSLRPQEESCATASSFSARDTSS). Residues Cys340 and Cys341 are each lipidated (S-palmitoyl cysteine). The tract at residues 347–370 (PPSLRPQEESCATASSFSARDTSS) is disordered. A compositionally biased stretch (polar residues) spans 356–370 (SCATASSFSARDTSS).

This sequence belongs to the G-protein coupled receptor 1 family. Vasopressin/oxytocin receptor subfamily. In terms of assembly, interacts with ARRDC4. Identified in a complex containing at least ARRDC4, V2R and HGS. Interacts with TMEM147.

The protein localises to the cell membrane. In terms of biological role, receptor for arginine vasopressin. The activity of this receptor is mediated by G proteins which activate adenylate cyclase. Involved in renal water reabsorption. This Sus scrofa (Pig) protein is Vasopressin V2 receptor (AVPR2).